Here is a 263-residue protein sequence, read N- to C-terminus: Serine protease ami (263 aa).

Residues 1-21 (MNISRVLFAVVLVLTVSTYEC) form the signal peptide. Residue Asn-2 is glycosylated (N-linked (GlcNAc...) asparagine). The propeptide at 22 to 26 (RPRGR) is activation peptide. The Peptidase S1 domain maps to 27–254 (ILGGQDSKEK…YKSWIMETMY (228 aa)). Cys-52 and Cys-68 are oxidised to a cystine. His-67 (charge relay system) is an active-site residue. Residues Asn-73, Asn-74, and Asn-108 are each glycosylated (N-linked (GlcNAc...) asparagine). The active-site Charge relay system is the Asp-115. Intrachain disulfides connect Cys-149-Cys-215, Cys-180-Cys-196, and Cys-205-Cys-230. Ser-209 functions as the Charge relay system in the catalytic mechanism. Asn-255 is a glycosylation site (N-linked (GlcNAc...) asparagine).

The protein belongs to the peptidase S1 family. As to expression, in the embryo, localizes to paraxial regions at the neurula stage and anterior ventral regions at the tailbud stage. From the late tailbud to tadpole stage, expressed along the forming blood vessels including the anterior cardinal veins, posterior cardinal veins, intersomitic veins, dorsal longitudinal anastomosing vessel, dorsal aorta, pronephric sinus and most prominently around the vascular vitelline network, where expression shows left-right asymmetry in the stage 42 embryo. Localizes to endothelial cells. In adults, shows highest expression in liver with moderate levels of expression in the fat body, lung, gut and vessels. Weakly expressed in adult heart, muscle, testis and ovary.

It localises to the secreted. Its function is as follows. Probable serine protease. The sequence is that of Serine protease ami from Xenopus laevis (African clawed frog).